Here is a 351-residue protein sequence, read N- to C-terminus: MLKNDLFLRALKRQPVPRTPIWVMRQAGRYLPEYRAIREKTDFLTLCKTPELATEVTIQPVDIIGVDAAIIFSDILVVNEAMGMNVEIIESKGIRLSPPIRSQVDIDRLIIPDINEKLGYVMDALRMTKKELDGRVPLIGFSGAAWTLFTYAVEGGGSKNYAFAKKMMYREPKMAHMLLSKISRVITEYLLMQIEAGADAVQIFDSWASALSEDDYREFALPYIKESVQAVKTKYPDTPVIVFSKDCNTILSDIADTGCDAMGLGWNMDISKARAELKDRVTIQGNMDPTVLYGTHDKIRAEAGKILERFGQHSECSGHVFNLGHGILPDVDPENLKCLVDFVKEESTKYH.

Substrate is bound by residues 25-29, aspartate 74, tyrosine 151, serine 206, and histidine 325; that span reads RQAGR.

The protein belongs to the uroporphyrinogen decarboxylase family. In terms of assembly, homodimer.

The protein localises to the cytoplasm. It carries out the reaction uroporphyrinogen III + 4 H(+) = coproporphyrinogen III + 4 CO2. Its pathway is porphyrin-containing compound metabolism; protoporphyrin-IX biosynthesis; coproporphyrinogen-III from 5-aminolevulinate: step 4/4. In terms of biological role, catalyzes the decarboxylation of four acetate groups of uroporphyrinogen-III to yield coproporphyrinogen-III. In Chlorobium phaeobacteroides (strain BS1), this protein is Uroporphyrinogen decarboxylase.